The following is a 161-amino-acid chain: Peptidyl-prolyl cis-trans isomerase-like 3 (161 aa).

Serine 2 is subject to N-acetylserine. The region spanning 2-154 is the PPIase cyclophilin-type domain; the sequence is SVTLHTDVGD…NDVHIKDITI (153 aa). An Omega-N-methylarginine modification is found at arginine 61.

The protein belongs to the cyclophilin-type PPIase family. PPIL3 subfamily. Identified in the spliceosome C complex. As to expression, ubiquitous. Detected at low levels.

It carries out the reaction [protein]-peptidylproline (omega=180) = [protein]-peptidylproline (omega=0). Functionally, PPIases accelerate the folding of proteins. It catalyzes the cis-trans isomerization of proline imidic peptide bonds in oligopeptides. May be involved in pre-mRNA splicing. This chain is Peptidyl-prolyl cis-trans isomerase-like 3 (PPIL3), found in Homo sapiens (Human).